The sequence spans 330 residues: DNA-directed RNA polymerase subunit alpha (330 aa).

Positions 1–229 are alpha N-terminal domain (alpha-NTD); it reads MKNLKFIKPF…DHFNVLVELS (229 aa). An alpha C-terminal domain (alpha-CTD) region spans residues 245 to 330; that stretch reads AHNYVLDLEI…HSVEEDKDKH (86 aa).

The protein belongs to the RNA polymerase alpha chain family. Homodimer. The RNAP catalytic core consists of 2 alpha, 1 beta, 1 beta' and 1 omega subunit. When a sigma factor is associated with the core the holoenzyme is formed, which can initiate transcription.

It catalyses the reaction RNA(n) + a ribonucleoside 5'-triphosphate = RNA(n+1) + diphosphate. Functionally, DNA-dependent RNA polymerase catalyzes the transcription of DNA into RNA using the four ribonucleoside triphosphates as substrates. The protein is DNA-directed RNA polymerase subunit alpha of Aster yellows witches'-broom phytoplasma (strain AYWB).